The sequence spans 488 residues: MDVGRCFLFLLLPSFFFLPSQTQSTDSFTSVLVSQNGLDFVKNLLVNKAIASIIPLQIPRIEKSMKIPFLGGIDVVVSNLTIYELDVASSYVKLGETGVVIVASGTTCNLSMNWHYSYSTWLPPIEISDQGIASVQVQGMEIGLSLGLKSDEGGLKLSLSECGCHVEDITIELEGGASWFYQGMVNAFKDQIGSSVESTIAKKLTEGVSDLDSFLQSLPKEIPVDDNADLNVTFTSDPILRNSSITFEIDGLFTKGETNQVLKSFFKKSVSLVICPGNSKMLGISVDEAVFNSAAALYYNADFVQWVVDKIPEQSLLNTARWRFIIPQLYKKYPNQDMNLNISLSSPPLVKISEQYVGANVNADLVINVLDANQVIPVACISLMIRGSGALRVMGNNLGGSVSLEDFSMSLKWSNIGNLHLHLLQPIVWTVIQTVFVPYANDHLEKGFPLPIMHGFTLQNAEIICSESEITVCSDVAYLDSSQQPQWL.

The signal sequence occupies residues 1-24 (MDVGRCFLFLLLPSFFFLPSQTQS). Asn79, Asn109, Asn231, Asn242, and Asn341 each carry an N-linked (GlcNAc...) asparagine glycan.

This sequence belongs to the BPI/LBP/Plunc superfamily. BPI/LBP (TC 1.C.40) family.

The chain is Putative BPI/LBP family protein At1g04970 from Arabidopsis thaliana (Mouse-ear cress).